Consider the following 31-residue polypeptide: Cyclotide cter-C (31 aa).

The cyclopeptide (Gly-Asp) cross-link spans 1 to 31 (GVPCAESCVWIPCTVTALLGCSCKDKVCYLD). 3 cysteine pairs are disulfide-bonded: Cys-4-Cys-21, Cys-8-Cys-23, and Cys-13-Cys-28.

In terms of processing, contains 3 disulfide bonds. Post-translationally, this is a cyclic peptide.

Probably participates in a plant defense mechanism. The polypeptide is Cyclotide cter-C (Clitoria ternatea (Butterfly pea)).